A 214-amino-acid chain; its full sequence is Endoplasmic reticulum vesicle protein 25 (214 aa).

The signal sequence occupies residues M1 to A20. Over L21–K183 the chain is Lumenal. Residues P33 to S124 enclose the GOLD domain. The chain crosses the membrane as a helical span at residues W184–L204. Residues R205–I214 are Cytoplasmic-facing.

This sequence belongs to the EMP24/GP25L family.

It is found in the endoplasmic reticulum membrane. The protein resides in the golgi apparatus membrane. Constituent of COPII-coated endoplasmic reticulum-derived transport vesicles. Required for efficient transport of a subset of secretory proteins to the Golgi. Facilitates retrograde transport from the Golgi to the endoplasmic reticulum. In Debaryomyces hansenii (strain ATCC 36239 / CBS 767 / BCRC 21394 / JCM 1990 / NBRC 0083 / IGC 2968) (Yeast), this protein is Endoplasmic reticulum vesicle protein 25 (ERV25).